Consider the following 157-residue polypeptide: Cyclic pyranopterin monophosphate synthase (157 aa).

Residues 74–76 (MCH) and 112–113 (ME) each bind substrate. Residue Asp127 is part of the active site.

Belongs to the MoaC family. In terms of assembly, homohexamer; trimer of dimers.

The catalysed reaction is (8S)-3',8-cyclo-7,8-dihydroguanosine 5'-triphosphate = cyclic pyranopterin phosphate + diphosphate. The protein operates within cofactor biosynthesis; molybdopterin biosynthesis. Functionally, catalyzes the conversion of (8S)-3',8-cyclo-7,8-dihydroguanosine 5'-triphosphate to cyclic pyranopterin monophosphate (cPMP). The sequence is that of Cyclic pyranopterin monophosphate synthase from Campylobacter jejuni (strain RM1221).